The chain runs to 291 residues: uncharacterized protein (291 aa).

Residues 77–140 (TVPQSSPTAI…PPTPVVEKSP (64 aa)) are disordered. Over residues 125-134 (PVTPAHPPTP) the composition is skewed to pro residues.

This is an uncharacterized protein from Synechocystis sp. (strain ATCC 27184 / PCC 6803 / Kazusa).